A 202-amino-acid polypeptide reads, in one-letter code: ATP-dependent Clp protease proteolytic subunit (202 aa).

Ser-101 functions as the Nucleophile in the catalytic mechanism. His-126 is an active-site residue.

It belongs to the peptidase S14 family. In terms of assembly, component of the chloroplastic Clp protease core complex.

The protein resides in the plastid. It is found in the chloroplast stroma. The enzyme catalyses Hydrolysis of proteins to small peptides in the presence of ATP and magnesium. alpha-casein is the usual test substrate. In the absence of ATP, only oligopeptides shorter than five residues are hydrolyzed (such as succinyl-Leu-Tyr-|-NHMec, and Leu-Tyr-Leu-|-Tyr-Trp, in which cleavage of the -Tyr-|-Leu- and -Tyr-|-Trp bonds also occurs).. Cleaves peptides in various proteins in a process that requires ATP hydrolysis. Has a chymotrypsin-like activity. Plays a major role in the degradation of misfolded proteins. This chain is ATP-dependent Clp protease proteolytic subunit, found in Illicium oligandrum (Star anise).